Here is a 342-residue protein sequence, read N- to C-terminus: Anthranilate phosphoribosyltransferase (342 aa).

Residues Gly84, 87–88 (GD), Thr92, 94–97 (NITT), 112–120 (KHGNRSVSS), and Ser124 contribute to the 5-phospho-alpha-D-ribose 1-diphosphate site. Gly84 contacts anthranilate. Thr96 provides a ligand contact to Mg(2+). Asn115 contacts anthranilate. Position 170 (Arg170) interacts with anthranilate. Mg(2+) is bound by residues Asp228 and Glu229.

The protein belongs to the anthranilate phosphoribosyltransferase family. As to quaternary structure, homodimer. It depends on Mg(2+) as a cofactor.

The enzyme catalyses N-(5-phospho-beta-D-ribosyl)anthranilate + diphosphate = 5-phospho-alpha-D-ribose 1-diphosphate + anthranilate. It participates in amino-acid biosynthesis; L-tryptophan biosynthesis; L-tryptophan from chorismate: step 2/5. Functionally, catalyzes the transfer of the phosphoribosyl group of 5-phosphorylribose-1-pyrophosphate (PRPP) to anthranilate to yield N-(5'-phosphoribosyl)-anthranilate (PRA). The polypeptide is Anthranilate phosphoribosyltransferase (Corynebacterium efficiens (strain DSM 44549 / YS-314 / AJ 12310 / JCM 11189 / NBRC 100395)).